A 210-amino-acid polypeptide reads, in one-letter code: Na(+)-translocating NADH-quinone reductase subunit D (210 aa).

Helical transmembrane passes span 42 to 62 (FVMT…VSLI), 72 to 92 (IIVQ…VLKA), 103 to 123 (VFVS…AFAM), 131 to 151 (FIDG…VAFF), and 178 to 198 (NGLM…IWAI).

This sequence belongs to the NqrDE/RnfAE family. In terms of assembly, composed of six subunits; NqrA, NqrB, NqrC, NqrD, NqrE and NqrF.

Its subcellular location is the cell inner membrane. It catalyses the reaction a ubiquinone + n Na(+)(in) + NADH + H(+) = a ubiquinol + n Na(+)(out) + NAD(+). NQR complex catalyzes the reduction of ubiquinone-1 to ubiquinol by two successive reactions, coupled with the transport of Na(+) ions from the cytoplasm to the periplasm. NqrA to NqrE are probably involved in the second step, the conversion of ubisemiquinone to ubiquinol. The chain is Na(+)-translocating NADH-quinone reductase subunit D from Aliivibrio fischeri (strain ATCC 700601 / ES114) (Vibrio fischeri).